Here is a 163-residue protein sequence, read N- to C-terminus: MALTKEQTQHLYHKLLDMQKELSGEKKETESMTEEVGELSNGVDNHMADHGTLVTDRMTDQTVKEIDRELLEEVNRALQKMKDGTYGVCEKTGQEIPYERLEAVPYARMTVEAQADVEDDLETDAPSYEREFHEQVKDLSNKETIDQKSSQTYEILDREQDSK.

Over residues Q19–E30 the composition is skewed to basic and acidic residues. 2 disordered regions span residues Q19–T55 and A115–K163. Residues C89–T123 form a dksA C4-type; degenerate zinc finger. Residues S127 to D146 show a composition bias toward basic and acidic residues.

The sequence is that of General stress protein 16O (yocK) from Bacillus subtilis (strain 168).